The sequence spans 171 residues: Cytochrome c-type biogenesis protein CcmE (171 aa).

Residues 1 to 7 lie on the Cytoplasmic side of the membrane; the sequence is MNRKQKR. A helical; Signal-anchor for type II membrane protein membrane pass occupies residues 8-28; that stretch reads LAVIAGGMGFIAAAVLLVMFA. Topologically, residues 29-171 are periplasmic; the sequence is FSQSVAYFYM…NPGEEAKATQ (143 aa). 2 residues coordinate heme: His124 and Tyr128. The tract at residues 132–171 is disordered; that stretch reads DVADRLKQQGLWKEGQGGQESPGKEGQGQENPGEEAKATQ.

The protein belongs to the CcmE/CycJ family.

The protein resides in the cell inner membrane. Functionally, heme chaperone required for the biogenesis of c-type cytochromes. Transiently binds heme delivered by CcmC and transfers the heme to apo-cytochromes in a process facilitated by CcmF and CcmH. This chain is Cytochrome c-type biogenesis protein CcmE, found in Rhizobium leguminosarum bv. trifolii (strain WSM2304).